We begin with the raw amino-acid sequence, 142 residues long: Probable transport accessory protein MmpS1 (142 aa).

The next 2 helical transmembrane spans lie at 8 to 28 (FWIPMVIVIVVAVAAVTVSRL) and 81 to 101 (VVNAAVPWSFTIVTTLTAVVA).

The protein belongs to the MmpS family.

The protein resides in the cell membrane. The polypeptide is Probable transport accessory protein MmpS1 (mmpS1) (Mycobacterium bovis (strain ATCC BAA-935 / AF2122/97)).